The primary structure comprises 221 residues: Immunoregulatory peptides (221 aa).

A signal peptide spans 1–19 (MNYLCLVVTLVAVAGAISG). The propeptide occupies 20-45 (EKFSDDNTGYQSTPSLRIRTTPGRRR). Positions 21-155 (KFSDDNTGYQ…PRTIGPPYTR (135 aa)) are disordered. A compositionally biased stretch (polar residues) spans 25–34 (DNTGYQSTPS). Residues 48–69 (PRTIGPPYTRRTLRTTTDYSTT) are compositionally biased toward low complexity. Polar residues-rich tracts occupy residues 70–85 (VENG…STEK) and 123–133 (NGTTPAANSTE). Positions 191–221 (EISWTFGPLYTWRTTKGYGTTLETTNATSTS) are excised as a propeptide.

In terms of tissue distribution, salivary glands.

Its subcellular location is the secreted. Suppress host inflammatory response. Exerts significant anti-inflammatory functions, either by directly inhibiting host secretion of inflammatory factors such as tumor necrosis factor-alpha (TNF), monocyte chemotactic protein-1 (CCL2), and interferon-gamma (IFNG) or by indirectly increasing the secretion of immunosuppressant cytokine of interleukin-10 (IL10). Also potently scavenges free radical in vitro in a rapid manner. All tested concentrations of this peptide have little effect on the cell viability. In vivo, inhibits hind paw adjuvant-induced inflammation in mouse in a dose-dependent manner. In terms of biological role, suppress host inflammatory response. Exerts significant anti-inflammatory functions, either by directly inhibiting host secretion of inflammatory factors such as tumor necrosis factor-alpha (TNF), monocyte chemotactic protein-1 (CCL2), and interferon-gamma (IFNG) or by indirectly increasing the secretion of immunosuppressant cytokine of interleukin-10 (IL10). Also potently scavenges free radical in vitro in a rapid manner. Low concentrations of this peptide have little effect on the cell viability, whereas high concentrations increase the cell viability by 10-20%. In vivo, inhibits hind paw adjuvant-induced inflammation in mouse in a dose-dependent manner. Functionally, not studied but probably similar to Hyalomin-B1. The protein is Immunoregulatory peptides of Hyalomma asiaticum asiaticum (Tick).